Here is a 442-residue protein sequence, read N- to C-terminus: Exodeoxyribonuclease 7 large subunit (442 aa).

It belongs to the XseA family. In terms of assembly, heterooligomer composed of large and small subunits.

The protein resides in the cytoplasm. It carries out the reaction Exonucleolytic cleavage in either 5'- to 3'- or 3'- to 5'-direction to yield nucleoside 5'-phosphates.. Bidirectionally degrades single-stranded DNA into large acid-insoluble oligonucleotides, which are then degraded further into small acid-soluble oligonucleotides. The polypeptide is Exodeoxyribonuclease 7 large subunit (Shewanella loihica (strain ATCC BAA-1088 / PV-4)).